A 1058-amino-acid polypeptide reads, in one-letter code: MSSSPLSKKRRVSGPDPKPGSNCSPAQSVLPQVPSAPTNGMAKNGSEADIDEGLYSRQLYVLGHEAMKRLQTSSVLVSGLRGLGVEIAKNIILGGVKAVTLHDQGTAQWADLSSQFYLREEDIGKNRAEVSQPRLAELNSYVPVTAYTGPLVEDFLSGFQVVVLTNSPLEDQLRVGEFCHSRGIKLVVADTRGLFGQLFCDFGEEMILTDSNGEQPLSTMVSMVTKDNPGVVTCLDEARHGFESGDFVSFSEVQGMTELNGNQPIEIKVLGPYTFSICDTSNFSDYIRGGIVSQVKVPKKISFKSLSASLAEPDFVMTDFAKFSRPAQLHIGFQALHKFCAQHSRPPRPRNEEDAAELVTLARAVNSKASSAVQQDSLDEDLIRNLAFVAAGDLAPINAFIGGLAAQEVMKACSGKFMPIMQWLYFDALECLPEDKESLTEDKCLPRQNRYDGQVAVFGSDLQEKLGRQKYFLVGAGAIGCELLKNFAMIGLGCGENGEIIVTDMDTIEKSNLNRQFLFRPWDVTKLKSDTAAAAVHQMNPHIRVTSHQNRVGPDTERIYDDDFFQTLDGVANALDNVDARMYMDRRCVYYRKPLLESGTLGTKGNVQVVIPFLTESYSSSQDPPEKSIPICTLKNFPNAIEHTLQWARDEFEGLFKQPAENVNQYLTDPKFVERTLRLAGTQPLEVLEAVQRSLVLQLPQSWADCVTWACHHWHTQYSNNIRQLLHNFPPDQLTSSGAPFWSGPKRCPHPLTFDVSNPLHLDYVMAAANLFAQTYGLAGSQDRAAVATLLQSVQVPEFTPKSGVKIHVSDQELQSANASVDDSRLEELKATLPSPDKLPGFKMYPIDFEKDDDSNFHMDFIVAASNLRAENYDIPPADRHKSKLIAGKIIPAIATTTAAVVGLVCLELYKVVQGHRHLDSYKNGFLNLALPFFGFSEPLAAPRHQYYNQEWTLWDRFEVQGLQPNGEEMTLKQFLDYFKTEHKLEITMLSQGVSMLYSFFMPAAKLKERLDQPMTEIVSRVSKRKLGRHVRALVLELCCNDESGEDVEVPYVRYTIR.

The segment at 1-47 is disordered; the sequence is MSSSPLSKKRRVSGPDPKPGSNCSPAQSVLPQVPSAPTNGMAKNGSE. Serine 2 is subject to N-acetylserine. Phosphoserine occurs at positions 4, 13, 21, 24, and 46. Polar residues predominate over residues 21–38; sequence SNCSPAQSVLPQVPSAPT. At tyrosine 55 the chain carries Phosphotyrosine. 2 consecutive repeat copies span residues 63–199 and 459–611. The 2 approximate repeats stretch occupies residues 63 to 611; the sequence is GHEAMKRLQT…GTKGNVQVVI (549 aa). ATP contacts are provided by residues alanine 478, aspartate 504, arginine 515, lysine 528, and 576-577; that span reads DN. An N6-succinyllysine modification is found at lysine 528. Residue cysteine 632 is the Glycyl thioester intermediate of the active site. The residue at position 671 (lysine 671) is an N6-acetyllysine. Threonine 800 bears the Phosphothreonine mark. Phosphoserine occurs at positions 810, 816, 820, and 835. Lysine 980 carries the N6-acetyllysine modification.

Belongs to the ubiquitin-activating E1 family. In terms of assembly, monomer. As to expression, ubiquitous.

The protein localises to the cytoplasm. The protein resides in the mitochondrion. It is found in the nucleus. It carries out the reaction ATP + ubiquitin + [E1 ubiquitin-activating enzyme]-L-cysteine = AMP + diphosphate + S-ubiquitinyl-[E1 ubiquitin-activating enzyme]-L-cysteine.. Its pathway is protein modification; protein ubiquitination. Catalyzes the first step in ubiquitin conjugation to mark cellular proteins for degradation through the ubiquitin-proteasome system. Activates ubiquitin by first adenylating its C-terminal glycine residue with ATP, and thereafter linking this residue to the side chain of a cysteine residue in E1, yielding a ubiquitin-E1 thioester and free AMP. Essential for the formation of radiation-induced foci, timely DNA repair and for response to replication stress. Promotes the recruitment of TP53BP1 and BRCA1 at DNA damage sites. The chain is Ubiquitin-like modifier-activating enzyme 1 (UBA1) from Oryctolagus cuniculus (Rabbit).